A 308-amino-acid chain; its full sequence is Glutaminase (308 aa).

Substrate contacts are provided by Ser-66, Asn-117, Glu-161, Asn-168, Tyr-192, Tyr-244, and Val-262.

Belongs to the glutaminase family. In terms of assembly, homotetramer.

It catalyses the reaction L-glutamine + H2O = L-glutamate + NH4(+). This is Glutaminase from Salmonella heidelberg (strain SL476).